The sequence spans 265 residues: Putative cysteine-rich receptor-like protein kinase At4g11521 (265 aa).

A signal peptide spans 1 to 23 (MMLNTLFLPIFLFFLITFDYVST). 2 Gnk2-homologous domains span residues 24 to 122 (QTCF…NISF) and 128 to 241 (MEPS…LYPF). 3 N-linked (GlcNAc...) asparagine glycosylation sites follow: asparagine 34, asparagine 102, and asparagine 119. An N-linked (GlcNAc...) asparagine glycan is attached at asparagine 247.

Belongs to the protein kinase superfamily. Ser/Thr protein kinase family. CRK subfamily.

Its subcellular location is the secreted. The polypeptide is Putative cysteine-rich receptor-like protein kinase At4g11521 (Arabidopsis thaliana (Mouse-ear cress)).